Consider the following 262-residue polypeptide: Sepiapterin reductase (262 aa).

Position 1 is an N-acetylmethionine (methionine 1). NADP(+)-binding positions include 15–21 (GASRGFG) and 43–44 (RS). The residue at position 46 (serine 46) is a Phosphoserine. Position 70–71 (70–71 (DL)) interacts with NADP(+). Substrate contacts are provided by residues 158 to 159 (SL) and tyrosine 171. Lysine 175 contributes to the NADP(+) binding site. The residue at position 196 (serine 196) is a Phosphoserine. Glycine 200 is a binding site for substrate. 202-207 (LDTDMQ) contributes to the NADP(+) binding site. Serine 214 bears the Phosphoserine mark. Aspartate 258 serves as a coordination point for substrate.

It belongs to the sepiapterin reductase family. Homodimer.

The protein localises to the cytoplasm. It carries out the reaction L-erythro-7,8-dihydrobiopterin + NADP(+) = L-sepiapterin + NADPH + H(+). The enzyme catalyses (6R)-L-erythro-5,6,7,8-tetrahydrobiopterin + 2 NADP(+) = 6-pyruvoyl-5,6,7,8-tetrahydropterin + 2 NADPH + 2 H(+). The catalysed reaction is (S)-benzoin + NADP(+) = benzil + NADPH + H(+). Catalyzes the final one or two reductions in tetra-hydrobiopterin biosynthesis to form 5,6,7,8-tetrahydrobiopterin. The enzyme also catalyzes the reduction of benzil to (S)-benzoin. The protein is Sepiapterin reductase (SPR) of Meriones unguiculatus (Mongolian jird).